We begin with the raw amino-acid sequence, 233 residues long: Transcriptional regulatory protein PrrA (233 aa).

Positions 9 to 123 (RVLVVDDDSD…ELVARVKALL (115 aa)) constitute a Response regulatory domain. Asp58 carries the post-translational modification 4-aspartylphosphate. The segment at residues 134–232 (SETIAVGPLE…VRGVGFVLRM (99 aa)) is a DNA-binding region (ompR/PhoB-type).

Phosphorylated by PrrB at Asp-58.

The protein localises to the cytoplasm. Its function is as follows. Member of the two-component regulatory system PrrB/PrrA that is involved specifically in early intracellular multiplication of Mycobacterium and is essential for its viability. Upon phosphorylation by PrrB, functions as a transcription regulator by direct binding to promoter regions of target genes to positively regulate their expression. Autoregulates its own expression. The chain is Transcriptional regulatory protein PrrA (prrA) from Mycobacterium leprae (strain TN).